The following is a 632-amino-acid chain: Nucleoside triphosphatase I (632 aa).

The 163-residue stretch at F42–K204 folds into the Helicase ATP-binding domain. H55–T62 lines the ATP pocket. The short motif at D141–H144 is the DEXH box element. Residues K367–K532 enclose the Helicase C-terminal domain. Residues D457–F524 form a binding to the cap-specific mRNA (nucleoside-2'-O-)-methyltransferase region.

Belongs to the helicase family. NPH I subfamily. In terms of assembly, monomer. Interacts (via C-terminus) with RAP94 (via N-terminus). Interacts with the cap-specific mRNA (nucleoside-2'-O-)-methyltransferase.

It localises to the virion. It catalyses the reaction a ribonucleoside 5'-triphosphate + H2O = a ribonucleoside 5'-diphosphate + phosphate + H(+). Functionally, DNA-dependent ATPase required for providing the needed energy to achieve the termination of early transcripts. Acts in concert with the RAP94 subunit of the virion RNA polymerase and the capping enzyme/VTF to catalyze release of UUUUUNU-containing nascent RNA from the elongation complex. NPH-I must bind ssDNA in order to exhibit ATPase activity. The polypeptide is Nucleoside triphosphatase I (NPH1) (Myxoma virus (strain Lausanne) (MYXV)).